A 219-amino-acid polypeptide reads, in one-letter code: 2,5-diamino-6-ribosylamino-4(3H)-pyrimidinone 5'-phosphate reductase (219 aa).

Residues Thr52, Asp56, 87 to 90 (SRCR), Val134, and 156 to 159 (GGTL) contribute to the NADP(+) site.

It belongs to the HTP reductase family. Homodimer.

It carries out the reaction 2,5-diamino-6-(1-D-ribitylamino)pyrimidin-4(3H)-one 5'-phosphate + NADP(+) = 2,5-diamino-6-(1-D-ribosylamino)pyrimidin-4(3H)-one 5'-phosphate + NADPH + H(+). The catalysed reaction is 2,5-diamino-6-(1-D-ribitylamino)pyrimidin-4(3H)-one 5'-phosphate + NAD(+) = 2,5-diamino-6-(1-D-ribosylamino)pyrimidin-4(3H)-one 5'-phosphate + NADH + H(+). Its pathway is cofactor biosynthesis; riboflavin biosynthesis. Functionally, catalyzes an early step in riboflavin biosynthesis, the NADPH-dependent reduction of the ribose side chain of 2,5-diamino-6-ribosylamino-4(3H)-pyrimidinone 5'-phosphate, yielding 2,5-diamino-6-ribitylamino-4(3H)-pyrimidinone 5'-phosphate. In Archaeoglobus fulgidus (strain ATCC 49558 / DSM 4304 / JCM 9628 / NBRC 100126 / VC-16), this protein is 2,5-diamino-6-ribosylamino-4(3H)-pyrimidinone 5'-phosphate reductase.